The chain runs to 360 residues: Catabolic L-serine/threonine dehydratase (360 aa).

Ser-2 is subject to N-acetylserine. The residue at position 37 (Lys-37) is an N6-(pyridoxal phosphate)lysine.

The protein belongs to the serine/threonine dehydratase family. Pyridoxal 5'-phosphate serves as cofactor.

The protein resides in the mitochondrion. The enzyme catalyses L-serine = pyruvate + NH4(+). The catalysed reaction is L-threonine = 2-oxobutanoate + NH4(+). The polypeptide is Catabolic L-serine/threonine dehydratase (CHA1) (Saccharomyces cerevisiae (strain ATCC 204508 / S288c) (Baker's yeast)).